A 357-amino-acid polypeptide reads, in one-letter code: Heat-inducible transcription repressor HrcA (357 aa).

This sequence belongs to the HrcA family.

Negative regulator of class I heat shock genes (grpE-dnaK-dnaJ and groELS operons). Prevents heat-shock induction of these operons. The protein is Heat-inducible transcription repressor HrcA of Chlorobium phaeobacteroides (strain DSM 266 / SMG 266 / 2430).